Reading from the N-terminus, the 388-residue chain is Succinate--CoA ligase [ADP-forming] subunit beta (388 aa).

Residues 9–244 enclose the ATP-grasp domain; sequence KQLFARYGMP…KSQEDEREAQ (236 aa). ATP contacts are provided by residues Lys-46, 53–55, Glu-99, Thr-102, and Glu-107; that span reads GRG. Asn-199 and Asp-213 together coordinate Mg(2+). Residues Asn-264 and 321–323 contribute to the substrate site; that span reads GIV.

Belongs to the succinate/malate CoA ligase beta subunit family. In terms of assembly, heterotetramer of two alpha and two beta subunits. Mg(2+) is required as a cofactor.

It catalyses the reaction succinate + ATP + CoA = succinyl-CoA + ADP + phosphate. It carries out the reaction GTP + succinate + CoA = succinyl-CoA + GDP + phosphate. Its pathway is carbohydrate metabolism; tricarboxylic acid cycle; succinate from succinyl-CoA (ligase route): step 1/1. Succinyl-CoA synthetase functions in the citric acid cycle (TCA), coupling the hydrolysis of succinyl-CoA to the synthesis of either ATP or GTP and thus represents the only step of substrate-level phosphorylation in the TCA. The beta subunit provides nucleotide specificity of the enzyme and binds the substrate succinate, while the binding sites for coenzyme A and phosphate are found in the alpha subunit. This chain is Succinate--CoA ligase [ADP-forming] subunit beta, found in Yersinia enterocolitica serotype O:8 / biotype 1B (strain NCTC 13174 / 8081).